Reading from the N-terminus, the 417-residue chain is Hydrogen cyanide synthase subunit HcnC (417 aa).

Residues 1–18 (MNRTYDIVIAGGGVIGAS) form the signal peptide. 7–21 (IVIAGGGVIGASCAY) lines the FAD pocket. The N-palmitoyl cysteine moiety is linked to residue Cys-19. Residue Cys-19 is the site of S-diacylglycerol cysteine attachment. The helical transmembrane segment at 46 to 66 (SAGGLWAIGESVGLGCGVIFF) threads the bilayer.

This sequence belongs to the FAD-dependent glycerol-3-phosphate dehydrogenase family. As to quaternary structure, heterotrimer of HcnA, HcnB and HcnC. FAD serves as cofactor.

The protein resides in the cell membrane. It catalyses the reaction glycine + 2 A = hydrogen cyanide + 2 AH2 + CO2. Its activity is regulated as follows. Oxygen is necessary for cyanogenesis. Activated by succinate, glycine methyl ester, glucose and D,L-methionine in addition to glycine. Phenazine methosulfate, methylene blue, 2,6-dichlorophenolindophenol (DCIP) and ferricyanide can replace oxygen for the reaction. Inhibited by pyrrolnitrin and acriflavine at 1 mM concentration. In terms of biological role, a three-component membrane-bound flavoenzyme that catalyzes the formation of hydrogen cyanide, a secondary metabolite, by transfer of electrons to a cyanide-resistant branch of the aerobic respiratory chain. This chain is Hydrogen cyanide synthase subunit HcnC, found in Pseudomonas aeruginosa (strain ATCC 15692 / DSM 22644 / CIP 104116 / JCM 14847 / LMG 12228 / 1C / PRS 101 / PAO1).